Reading from the N-terminus, the 557-residue chain is Formate--tetrahydrofolate ligase (557 aa).

Residue 65–72 (TPAGEGKT) coordinates ATP.

The protein belongs to the formate--tetrahydrofolate ligase family.

The enzyme catalyses (6S)-5,6,7,8-tetrahydrofolate + formate + ATP = (6R)-10-formyltetrahydrofolate + ADP + phosphate. It participates in one-carbon metabolism; tetrahydrofolate interconversion. The sequence is that of Formate--tetrahydrofolate ligase from Acidiphilium cryptum (strain JF-5).